A 222-amino-acid polypeptide reads, in one-letter code: Pyrrolidone-carboxylate peptidase (222 aa).

Residues Glu80, Cys146, and His170 contribute to the active site.

The protein belongs to the peptidase C15 family. Homotetramer.

It is found in the cytoplasm. The enzyme catalyses Release of an N-terminal pyroglutamyl group from a polypeptide, the second amino acid generally not being Pro.. In terms of biological role, removes 5-oxoproline from various penultimate amino acid residues except L-proline. The sequence is that of Pyrrolidone-carboxylate peptidase from Mycobacterium tuberculosis (strain ATCC 25177 / H37Ra).